The chain runs to 144 residues: Large ribosomal subunit protein uL11 (144 aa).

Belongs to the universal ribosomal protein uL11 family. As to quaternary structure, part of the ribosomal stalk of the 50S ribosomal subunit. Interacts with L10 and the large rRNA to form the base of the stalk. L10 forms an elongated spine to which L12 dimers bind in a sequential fashion forming a multimeric L10(L12)X complex. In terms of processing, one or more lysine residues are methylated.

Forms part of the ribosomal stalk which helps the ribosome interact with GTP-bound translation factors. The chain is Large ribosomal subunit protein uL11 from Polaromonas sp. (strain JS666 / ATCC BAA-500).